Here is a 415-residue protein sequence, read N- to C-terminus: MTELIKKGIAAREASSFLAQATTKQKNTALINLSNDLIANTATLLKENEKDIIRAKEKKTPDTMIDRLRLTEERIKEISEAVKQVVTLKDPIGEVTTMWKNEAELTIGKIRVPLGVIGIIYESRPNVTVDASILCFKTGNAVILRGGSDAIDSNKALMNVIQESLEKSGFPRTSVQLIEDTSRETAREMMRLNRFLDVLIPRGGAKLIQTVLENATVPVIETGTGNCHIYVDKAAEKQMAIDILVNAKCSRPSVCNSAETLLIHESVAEDFLPAMEMALKEYNVELRADKRAREILKDAKAATESDWEEEFLDFILAIKVVDSVEEAINHINKYGTKHSEAIISNDYATGQAFHQKVDAAAVYINASTRFTDGFAMGFGAEIGISTQKLHARGPMGLTELTSTKYIIFGDGQIRN.

Belongs to the gamma-glutamyl phosphate reductase family.

Its subcellular location is the cytoplasm. It catalyses the reaction L-glutamate 5-semialdehyde + phosphate + NADP(+) = L-glutamyl 5-phosphate + NADPH + H(+). The protein operates within amino-acid biosynthesis; L-proline biosynthesis; L-glutamate 5-semialdehyde from L-glutamate: step 2/2. Catalyzes the NADPH-dependent reduction of L-glutamate 5-phosphate into L-glutamate 5-semialdehyde and phosphate. The product spontaneously undergoes cyclization to form 1-pyrroline-5-carboxylate. This chain is Gamma-glutamyl phosphate reductase, found in Listeria welshimeri serovar 6b (strain ATCC 35897 / DSM 20650 / CCUG 15529 / CIP 8149 / NCTC 11857 / SLCC 5334 / V8).